Here is a 239-residue protein sequence, read N- to C-terminus: 1-(5-phosphoribosyl)-5-[(5-phosphoribosylamino)methylideneamino] imidazole-4-carboxamide isomerase (239 aa).

D12 (proton acceptor) is an active-site residue. The active-site Proton donor is D133.

The protein belongs to the HisA/HisF family.

It localises to the cytoplasm. It carries out the reaction 1-(5-phospho-beta-D-ribosyl)-5-[(5-phospho-beta-D-ribosylamino)methylideneamino]imidazole-4-carboxamide = 5-[(5-phospho-1-deoxy-D-ribulos-1-ylimino)methylamino]-1-(5-phospho-beta-D-ribosyl)imidazole-4-carboxamide. It functions in the pathway amino-acid biosynthesis; L-histidine biosynthesis; L-histidine from 5-phospho-alpha-D-ribose 1-diphosphate: step 4/9. This is 1-(5-phosphoribosyl)-5-[(5-phosphoribosylamino)methylideneamino] imidazole-4-carboxamide isomerase from Sulfurihydrogenibium sp. (strain YO3AOP1).